The primary structure comprises 386 residues: Probable pectin lyase F (386 aa).

The signal sequence occupies residues 1-16 (MKTAVLSLLLALQAYA). A disulfide bridge links Cys-77 with Cys-101. Asn-124 carries an N-linked (GlcNAc...) asparagine glycan. The active site involves Arg-251. A disulfide bond links Cys-326 and Cys-334.

This sequence belongs to the polysaccharide lyase 1 family.

It localises to the secreted. The catalysed reaction is Eliminative cleavage of (1-&gt;4)-alpha-D-galacturonan methyl ester to give oligosaccharides with 4-deoxy-6-O-methyl-alpha-D-galact-4-enuronosyl groups at their non-reducing ends.. Its function is as follows. Pectinolytic enzymes consist of four classes of enzymes: pectin lyase, polygalacturonase, pectin methylesterase and rhamnogalacturonase. Among pectinolytic enzymes, pectin lyase is the most important in depolymerization of pectin, since it cleaves internal glycosidic bonds of highly methylated pectins. The protein is Probable pectin lyase F (pelF) of Neosartorya fischeri (strain ATCC 1020 / DSM 3700 / CBS 544.65 / FGSC A1164 / JCM 1740 / NRRL 181 / WB 181) (Aspergillus fischerianus).